The following is an 89-amino-acid chain: Small ribosomal subunit protein uS14 (89 aa).

This sequence belongs to the universal ribosomal protein uS14 family. In terms of assembly, part of the 30S ribosomal subunit. Contacts proteins S3 and S10.

Binds 16S rRNA, required for the assembly of 30S particles and may also be responsible for determining the conformation of the 16S rRNA at the A site. This chain is Small ribosomal subunit protein uS14, found in Streptococcus pneumoniae serotype 2 (strain D39 / NCTC 7466).